A 496-amino-acid polypeptide reads, in one-letter code: UDP-N-acetylmuramoylalanine--D-glutamate ligase (496 aa).

130–136 (GTNGKTT) contacts ATP.

The protein belongs to the MurCDEF family.

The protein resides in the cytoplasm. The catalysed reaction is UDP-N-acetyl-alpha-D-muramoyl-L-alanine + D-glutamate + ATP = UDP-N-acetyl-alpha-D-muramoyl-L-alanyl-D-glutamate + ADP + phosphate + H(+). Its pathway is cell wall biogenesis; peptidoglycan biosynthesis. Cell wall formation. Catalyzes the addition of glutamate to the nucleotide precursor UDP-N-acetylmuramoyl-L-alanine (UMA). This is UDP-N-acetylmuramoylalanine--D-glutamate ligase from Mycobacterium bovis (strain ATCC BAA-935 / AF2122/97).